A 397-amino-acid polypeptide reads, in one-letter code: uncharacterized protein (397 aa).

9 helical membrane-spanning segments follow: residues 1 to 21 (MGAS…LMLV), 39 to 59 (VIQS…VVVF), 76 to 96 (EALS…FGVP), 103 to 123 (VLLF…FVGA), 124 to 144 (ALIE…LVMA), 194 to 214 (MMTP…LFAF), 219 to 239 (ALFG…FSLL), 255 to 275 (LVYL…KLML), and 301 to 321 (QSLT…FWSA).

The protein belongs to the TerC family.

Its subcellular location is the cell membrane. This is an uncharacterized protein from Mycobacterium bovis (strain ATCC BAA-935 / AF2122/97).